Reading from the N-terminus, the 198-residue chain is Probable host range protein 2 (198 aa).

A disordered region spans residues 171–198; it reads SDDDDDNDNADDDEEDDDEVNDIEDDYE.

Belongs to the poxviridae C7 protein family.

Plays a role for multiplication of the virus in different cell types. The chain is Probable host range protein 2 from Bos taurus (Bovine).